A 1977-amino-acid chain; its full sequence is Voltage-dependent L-type calcium channel subunit alpha-1F (1977 aa).

Basic and acidic residues predominate over residues 1 to 11 (MSESEGGKDTT). The segment at 1 to 60 (MSESEGGKDTTPEPSPANGAGPGPEWGLCPGPPAVEGESSGASGLGTPKRRNQHSKHKTV) is disordered. The Cytoplasmic portion of the chain corresponds to 1–92 (MSESEGGKDT…RSCISIVEWK (92 aa)). Positions 48 to 59 (PKRRNQHSKHKT) are enriched in basic residues. Residues 79-375 (NPLRRSCISI…LVLGVLSGEF (297 aa)) form an I repeat. The chain crosses the membrane as a helical span at residues 93–111 (PFDILILLTIFANCVALGV). At 112-129 (YIPFPEDDSNTANHNLEQ) the chain is on the extracellular side. A helical transmembrane segment spans residues 130-149 (VEYVFLVIFTVETVLKIVAY). The Cytoplasmic portion of the chain corresponds to 150-161 (GLVLHPSAYIRN). A helical membrane pass occupies residues 162–180 (GWNLLDFIIVVVGLFSVLL). The Extracellular portion of the chain corresponds to 181–201 (EQGPGRPGDAPHTGGKPGGFD). The helical transmembrane segment at 202 to 220 (VKALRAFRVLRPLRLVSGV) threads the bilayer. The Cytoplasmic portion of the chain corresponds to 221-239 (PSLHIVLNSIMKALVPLLH). A helical transmembrane segment spans residues 240-259 (IALLVLFVIIIYAIIGLELF). Residues 260–347 (LGRMHKTCYF…WMQDAMGYEL (88 aa)) are Extracellular-facing. The N-linked (GlcNAc...) asparagine glycan is linked to Asn-295. Glu-330 lines the Ca(2+) pocket. Residues 348-372 (PWVYFVSLVIFGSFFVLNLVLGVLS) form a helical membrane-spanning segment. Topologically, residues 373–529 (GEFSKEREKA…ARCRRAVKSN (157 aa)) are cytoplasmic. The tract at residues 395-412 (QQMEEDLRGYLDWITQAE) is binding to the beta subunit. Disordered stretches follow at residues 418 to 441 (DPSA…PQLA) and 455 to 488 (SHST…EDEE). Low complexity predominate over residues 455–469 (SHSTRSTHSTSSHAS). The stretch at 515-761 (NRVLRARCRR…VFLAIAVDNL (247 aa)) is one II repeat. A helical membrane pass occupies residues 530-549 (ACYWAVLLLVFLNTLTIASE). Residues 550–564 (HHGQPVWLTQIQEYA) are Extracellular-facing. A helical membrane pass occupies residues 565–583 (NKVLLCLFTVEMLLKLYGL). Residues 584–591 (GPSAYVSS) are Cytoplasmic-facing. The helical transmembrane segment at 592 to 610 (FFNRFDCFVVCGGILETTL) threads the bilayer. Topologically, residues 611–620 (VEVGAMQPLG) are extracellular. The helical transmembrane segment at 621 to 639 (ISVLRCVRLLRIFKVTRHW) threads the bilayer. The Cytoplasmic portion of the chain corresponds to 640 to 658 (ASLSNLVASLLNSMKSIAS). A helical transmembrane segment spans residues 659–679 (LLLLLFLFIIIFSLLGMQLFG). The Extracellular portion of the chain corresponds to 680–733 (GKFNFDQTHTKRSTFDTFPQALLTVFQILTGEDWNVVMYDGIMAYGGPFFPGML). Position 711 (Glu-711) interacts with Ca(2+). Residues 734–758 (VCIYFIILFICGNYILLNVFLAIAV) form a helical membrane-spanning segment. At 759–871 (DNLASGDAGT…KGCHTLIHHH (113 aa)) the chain is on the cytoplasmic side. A disordered region spans residues 767–830 (GTAKDKGGEK…EEEEEGAGGV (64 aa)). Basic and acidic residues predominate over residues 768–783 (TAKDKGGEKSNEKDLP). Residues 807–826 (DMEEEEEEEEEEEEEEEEEG) are compositionally biased toward acidic residues. The III repeat unit spans residues 858 to 1140 (NPLRKGCHTL…IFVGFVIITF (283 aa)). Residues 872–890 (VFTNLILVFIILSSVSLAA) traverse the membrane as a helical segment. The Extracellular segment spans residues 891-906 (EDPIRAHSFRNHILGY). The helical transmembrane segment at 907-926 (FDYAFTSIFTVEILLKMTVF) threads the bilayer. Residues 927–938 (GAFLHRGSFCRS) are Cytoplasmic-facing. The helical transmembrane segment at 939–957 (WFNMLDLLVVSVSLISFGI) threads the bilayer. Over 958 to 963 (HSSAIS) the chain is Extracellular. Residues 964 to 983 (VVKILRVLRVLRPLRAINRA) form a helical membrane-spanning segment. Residues 984 to 1002 (KGLKHVVQCVFVAIRTIGN) are Cytoplasmic-facing. A helical membrane pass occupies residues 1003–1022 (IMIVTTLLQFMFACIGVQLF). Over 1023-1112 (KGKFYTCTDE…HGPIYNYRVE (90 aa)) the chain is Extracellular. The segment at 1060–1150 (RLWVNSDFNF…RAQGEQEYQN (91 aa)) is dihydropyridine binding. Ca(2+) is bound at residue Glu-1086. Residues 1113-1133 (ISVFFIVYIIIIAFFMMNIFV) traverse the membrane as a helical segment. Residues 1134–1190 (GFVIITFRAQGEQEYQNCELDKNQRQCVEYALKAQPLRRYIPKNPHQYRVWATVNSA) are Cytoplasmic-facing. One copy of the IV repeat lies at 1177 to 1444 (NPHQYRVWAT…LFVAVIMDNF (268 aa)). Residues 1191–1209 (AFEYLMFLLILLNTVALAM) form a helical membrane-spanning segment. The Extracellular portion of the chain corresponds to 1210-1224 (QHYEQTAPFNYAMDI). A helical membrane pass occupies residues 1225-1244 (LNMVFTGLFTIEMVLKIIAF). Residues 1245 to 1251 (KPKHYFT) lie on the Cytoplasmic side of the membrane. The helical transmembrane segment at 1252 to 1273 (DAWNTFDALIVVGSIVDIAVTE) threads the bilayer. The Extracellular segment spans residues 1274–1290 (VNNGGHLGESSEDSSRI). A helical transmembrane segment spans residues 1291-1310 (SITFFRLFRVMRLVKLLSKG). At 1311–1329 (EGIRTLLWTFIKSFQALPY) the chain is on the cytoplasmic side. The helical transmembrane segment at 1330 to 1349 (VALLIAMIFFIYAVIGMQMF) threads the bilayer. The Extracellular portion of the chain corresponds to 1350-1416 (GKVALQDGTQ…GEEFTCGSNF (67 aa)). The dihydropyridine binding stretch occupies residues 1397-1463 (RCDPESDFGP…LGPHHLDEFK (67 aa)). The phenylalkylamine binding stretch occupies residues 1409-1452 (EFTCGSNFAIAYFISFFMLCAFLIINLFVAVIMDNFDYLTRDWS). A helical membrane pass occupies residues 1417 to 1441 (AIAYFISFFMLCAFLIINLFVAVIM). At 1442-1977 (DNFDYLTRDW…GDEMACVHAL (536 aa)) the chain is on the cytoplasmic side. Disordered regions lie at residues 1637-1754 (CDTE…EVPD) and 1816-1841 (DLPI…WATP). Residues 1638–1657 (DTEEEEEEGQEGVEEEDEKD) show a composition bias toward acidic residues. Composition is skewed to polar residues over residues 1661 to 1670 (NKATMVSQPS), 1702 to 1716 (TPTS…AGSN), 1733 to 1743 (GNSQPKGTKGQ), and 1829 to 1840 (SGPNRAQGSWAT).

Belongs to the calcium channel alpha-1 subunit (TC 1.A.1.11) family. CACNA1F subfamily. In terms of assembly, voltage-dependent calcium channels are multisubunit complexes, consisting of alpha-1, alpha-2, beta and delta subunits in a 1:1:1:1 ratio. The channel activity is directed by the pore-forming and voltage-sensitive alpha-1 subunit. In many cases, this subunit is sufficient to generate voltage-sensitive calcium channel activity. The auxiliary subunits beta and alpha-2/delta linked by a disulfide bridge regulate the channel activity. Interacts (via IQ domain) with CABP4; in a calcium independent manner. As to quaternary structure, interacts with CABP4; suppresses robust calcium-dependent inactivation of channel without enhancing the hyperpolarized voltage-dependent activation. As to expression, expression in skeletal muscle and retina. Isoform 4 is expressed in retina.

It localises to the membrane. It carries out the reaction Ca(2+)(in) = Ca(2+)(out). In terms of biological role, voltage-sensitive calcium channels (VSCC) mediate the entry of calcium ions into excitable cells and are also involved in a variety of calcium-dependent processes, including muscle contraction, hormone or neurotransmitter release, gene expression, cell motility, cell division and cell death. The isoform alpha-1F gives rise to L-type calcium currents. Long-lasting (L-type) calcium channels belong to the 'high-voltage activated' (HVA) group. They are blocked by dihydropyridines (DHP), phenylalkylamines, and by benzothiazepines. Activates at more negative voltages and does not undergo calcium-dependent inactivation (CDI), due to incoming calcium ions, during depolarization. Voltage-dependent L-type calcium channel activates at more hyperpolarized voltages and exhibits a robust calcium-dependent inactivation (CDI), due to incoming calcium ions, during depolarizations. Its function is as follows. Voltage-sensitive calcium channels (VSCC) mediate the entry of calcium ions into excitable cells and are also involved in a variety of calcium-dependent processes, including muscle contraction, hormone or neurotransmitter release, gene expression, cell motility, cell division and cell death. The protein is Voltage-dependent L-type calcium channel subunit alpha-1F of Homo sapiens (Human).